The following is a 193-amino-acid chain: Rho-related GTP-binding protein RhoA-C (193 aa).

GTP-binding positions include 12–19 (GDGACGKT), 30–37 (FPEVYVPT), 59–63 (DTAGQ), 117–120 (NKKD), and 160–162 (SAK). A (Microbial infection) O-linked (GlcNAc) tyrosine; by Yersinia Afp18 glycan is attached at tyrosine 34. Cysteine 190 carries the cysteine methyl ester modification. Cysteine 190 carries the S-geranylgeranyl cysteine lipid modification. A propeptide spans 191–193 (LLL) (removed in mature form).

It belongs to the small GTPase superfamily. Rho family. (Microbial infection) Glycosylated at Tyr-34 by Yersinia ruckeri toxin Afp18. Mono-O-GlcNAcylation by Afp18 inhibits RhoA activation by guanine nucleotide exchange factors and blocks RhoA signaling.

The protein localises to the cell membrane. Regulates a signal transduction pathway linking plasma membrane receptors to the assembly of focal adhesions and actin stress fibers. This chain is Rho-related GTP-binding protein RhoA-C, found in Danio rerio (Zebrafish).